The sequence spans 183 residues: Inner membrane protein p54 (183 aa).

A helical membrane pass occupies residues tyrosine 32–phenylalanine 52. The tract at residues glutamate 81 to threonine 157 is disordered. Polar residues predominate over residues arginine 111 to proline 122. Low complexity predominate over residues alanine 130 to alanine 143. The segment at tyrosine 149–threonine 161 is interaction with host DYNLL1.

The protein belongs to the asfivirus envelope protein p54 family. In terms of assembly, interacts with the host light chain cytoplasmic dynein DYNLL1; this interaction is critical for intracellular microtubule-dependent virus transport toward viral factories.

It localises to the virion membrane. The protein localises to the host cytoplasm. It is found in the host cytoskeleton. The protein resides in the host endoplasmic reticulum membrane. Functionally, inner envelope protein involved, through its interaction with host dynein, in the intracellular microtubule-dependent transport of viral capsid toward viral factories. Seems to induce caspase-3 activation and apoptosis. Plays a role in virion morphogenesis by recruiting and transforming the host ER membranes into the precursors of the viral envelope. Involved in virus attachment to the host cell. The sequence is that of Inner membrane protein p54 from African swine fever virus (strain Badajoz 1971 Vero-adapted) (Ba71V).